We begin with the raw amino-acid sequence, 265 residues long: Protein Msed_2121 (265 aa).

Belongs to the CinA family.

The chain is Protein Msed_2121 from Metallosphaera sedula (strain ATCC 51363 / DSM 5348 / JCM 9185 / NBRC 15509 / TH2).